Here is a 264-residue protein sequence, read N- to C-terminus: uncharacterized protein (264 aa).

This is an uncharacterized protein from Bacillus subtilis (strain 168).